The primary structure comprises 271 residues: Glutamate racemase (271 aa).

Substrate contacts are provided by residues 10–11 and 42–43; these read DS and YG. Cys-73 acts as the Proton donor/acceptor in catalysis. A substrate-binding site is contributed by 74 to 75; that stretch reads NT. The Proton donor/acceptor role is filled by Cys-183. Position 184-185 (184-185) interacts with substrate; sequence TH.

This sequence belongs to the aspartate/glutamate racemases family.

The enzyme catalyses L-glutamate = D-glutamate. It participates in cell wall biogenesis; peptidoglycan biosynthesis. Provides the (R)-glutamate required for cell wall biosynthesis. The chain is Glutamate racemase from Streptococcus thermophilus (strain ATCC BAA-250 / LMG 18311).